We begin with the raw amino-acid sequence, 364 residues long: Mannose-1-phosphate guanyltransferase (364 aa).

Belongs to the transferase hexapeptide repeat family.

It localises to the cytoplasm. It carries out the reaction alpha-D-mannose 1-phosphate + GTP + H(+) = GDP-alpha-D-mannose + diphosphate. The protein operates within nucleotide-sugar biosynthesis; GDP-alpha-D-mannose biosynthesis; GDP-alpha-D-mannose from alpha-D-mannose 1-phosphate (GTP route): step 1/1. Functionally, involved in cell wall synthesis where it is required for glycosylation. Involved in cell cycle progression through cell-size checkpoint. The protein is Mannose-1-phosphate guanyltransferase (mpg1) of Hypocrea jecorina (Trichoderma reesei).